A 347-amino-acid polypeptide reads, in one-letter code: Phenylalanine--tRNA ligase alpha subunit (347 aa).

Residue E262 coordinates Mg(2+).

The protein belongs to the class-II aminoacyl-tRNA synthetase family. Phe-tRNA synthetase alpha subunit type 1 subfamily. In terms of assembly, tetramer of two alpha and two beta subunits. Mg(2+) serves as cofactor.

Its subcellular location is the cytoplasm. It carries out the reaction tRNA(Phe) + L-phenylalanine + ATP = L-phenylalanyl-tRNA(Phe) + AMP + diphosphate + H(+). This chain is Phenylalanine--tRNA ligase alpha subunit, found in Roseiflexus castenholzii (strain DSM 13941 / HLO8).